The primary structure comprises 488 residues: Alkaline nuclease (488 aa).

Belongs to the herpesviridae alkaline nuclease family. Interacts with major DNA-binding protein; this interaction increases the nuclease processivity of the alkaline exonuclease.

The protein resides in the host nucleus. Its subcellular location is the host cytoplasm. Its function is as follows. Plays a role in processing non linear or branched viral DNA intermediates in order to promote the production of mature packaged unit-length linear progeny viral DNA molecules. Exhibits endonuclease and exonuclease activities and accepts both double-stranded and single-stranded DNA as substrate. Exonuclease digestion of DNA is in the 5'-&gt; 3' direction and the products are 5'-monophosphate nucleosides. Additionally, forms a recombinase with the major DNA-binding protein, which displays strand exchange activity. This chain is Alkaline nuclease (U70), found in Homo sapiens (Human).